A 226-amino-acid polypeptide reads, in one-letter code: Flagellar L-ring protein (226 aa).

The first 15 residues, 1-15 (MRILGLSAALLILGG), serve as a signal peptide directing secretion. C16 is lipidated: N-palmitoyl cysteine. The S-diacylglycerol cysteine moiety is linked to residue C16.

This sequence belongs to the FlgH family. As to quaternary structure, the basal body constitutes a major portion of the flagellar organelle and consists of four rings (L,P,S, and M) mounted on a central rod.

It is found in the cell outer membrane. Its subcellular location is the bacterial flagellum basal body. In terms of biological role, assembles around the rod to form the L-ring and probably protects the motor/basal body from shearing forces during rotation. In Alteromonas mediterranea (strain DSM 17117 / CIP 110805 / LMG 28347 / Deep ecotype), this protein is Flagellar L-ring protein.